The primary structure comprises 329 residues: Ephrin-B1 (329 aa).

Positions 1 to 20 (MEGLRRLLGLLLVLYRLCSA) are cleaved as a signal peptide. At 21-226 (LGKNLEPVTW…FFNSKIAVFA (206 aa)) the chain is on the extracellular side. An Ephrin RBD domain is found at 23–157 (KNLEPVTWNS…TRSMKIIMKV (135 aa)). 2 disulfide bridges follow: C57–C94 and C82–C146. N132 is a glycosylation site (N-linked (GlcNAc...) asparagine). Residues 163–192 (AVPPEQLTTTRPSKEADNTGKIATFGPWNG) are disordered. An N-linked (GlcNAc...) asparagine glycan is attached at N203. The chain crosses the membrane as a helical span at residues 227 to 247 (AIGAGCVIFILIIIFLVVLLI). The Cytoplasmic portion of the chain corresponds to 248–329 (KIRKRHRKHT…QSPANIYYKV (82 aa)). The short motif at 327–329 (YKV) is the PDZ-binding element.

It belongs to the ephrin family. As to quaternary structure, interacts with TLE4 through the PDZ-binding motif. In terms of processing, inducible phosphorylation of tyrosine residues in the cytoplasmic domain. Tyrosine phosphorylation inhibits TLE4-binding. Expressed at low levels in most tissues with highest levels in the kidney, oocytes, ovary and testis.

The protein localises to the membrane. Its function is as follows. Cell surface transmembrane ligand for Eph receptors, a family of receptor tyrosine kinases which are crucial for migration, repulsion and adhesion during neuronal, vascular and epithelial development. Binds promiscuously Eph receptors residing on adjacent cells, leading to contact-dependent bidirectional signaling into neighboring cells. The signaling pathway downstream of the receptor is referred to as forward signaling while the signaling pathway downstream of the ephrin ligand is referred to as reverse signaling. May have a role in the developing mesenchymal and nervous tissue. The protein is Ephrin-B1 (efnb1) of Xenopus laevis (African clawed frog).